The following is a 143-amino-acid chain: HTH-type transcriptional regulator MntR (143 aa).

One can recognise an HTH dtxR-type domain in the interval 1 to 63 (MPTPSMEDYL…YERYRGLVLT (63 aa)). Residues Asp8, Glu11, His77, Glu99, Glu102, and His103 each contribute to the Mn(2+) site.

Belongs to the DtxR/MntR family. In terms of assembly, homodimer.

It localises to the cytoplasm. With respect to regulation, DNA binding is strongly activated by Mn(2+). Central regulator of manganese homeostasis. The sequence is that of HTH-type transcriptional regulator MntR from Shouchella clausii (strain KSM-K16) (Alkalihalobacillus clausii).